We begin with the raw amino-acid sequence, 395 residues long: 1-deoxy-D-xylulose 5-phosphate reductoisomerase (395 aa).

NADPH is bound by residues Thr13, Gly14, Ser15, Ile16, Lys40, and Asn127. Lys128 serves as a coordination point for 1-deoxy-D-xylulose 5-phosphate. NADPH is bound at residue Glu129. Asp153 is a binding site for Mn(2+). 1-deoxy-D-xylulose 5-phosphate is bound by residues Ser154, Glu155, Ser184, and His207. Glu155 lines the Mn(2+) pocket. Position 213 (Gly213) interacts with NADPH. 1-deoxy-D-xylulose 5-phosphate-binding residues include Ser220, Asn225, Lys226, and Glu229. Residue Glu229 coordinates Mn(2+).

This sequence belongs to the DXR family. Mg(2+) is required as a cofactor. Requires Mn(2+) as cofactor.

The catalysed reaction is 2-C-methyl-D-erythritol 4-phosphate + NADP(+) = 1-deoxy-D-xylulose 5-phosphate + NADPH + H(+). It participates in isoprenoid biosynthesis; isopentenyl diphosphate biosynthesis via DXP pathway; isopentenyl diphosphate from 1-deoxy-D-xylulose 5-phosphate: step 1/6. Catalyzes the NADPH-dependent rearrangement and reduction of 1-deoxy-D-xylulose-5-phosphate (DXP) to 2-C-methyl-D-erythritol 4-phosphate (MEP). The chain is 1-deoxy-D-xylulose 5-phosphate reductoisomerase from Nitrosospira multiformis (strain ATCC 25196 / NCIMB 11849 / C 71).